A 360-amino-acid chain; its full sequence is Peptide chain release factor 1 (360 aa).

Gln-235 bears the N5-methylglutamine mark. Residues 284–313 (AKRQQAEASTRRNLLGSGDRSDRNRTYNFP) are disordered.

Belongs to the prokaryotic/mitochondrial release factor family. Methylated by PrmC. Methylation increases the termination efficiency of RF1.

The protein localises to the cytoplasm. Functionally, peptide chain release factor 1 directs the termination of translation in response to the peptide chain termination codons UAG and UAA. The chain is Peptide chain release factor 1 from Escherichia coli (strain UTI89 / UPEC).